We begin with the raw amino-acid sequence, 503 residues long: Probable cytosol aminopeptidase (503 aa).

Mn(2+) is bound by residues Lys270 and Asp275. Lys282 is an active-site residue. Positions 293, 352, and 354 each coordinate Mn(2+). Arg356 is a catalytic residue.

The protein belongs to the peptidase M17 family. Mn(2+) serves as cofactor.

The protein localises to the cytoplasm. The catalysed reaction is Release of an N-terminal amino acid, Xaa-|-Yaa-, in which Xaa is preferably Leu, but may be other amino acids including Pro although not Arg or Lys, and Yaa may be Pro. Amino acid amides and methyl esters are also readily hydrolyzed, but rates on arylamides are exceedingly low.. It carries out the reaction Release of an N-terminal amino acid, preferentially leucine, but not glutamic or aspartic acids.. Its function is as follows. Presumably involved in the processing and regular turnover of intracellular proteins. Catalyzes the removal of unsubstituted N-terminal amino acids from various peptides. The chain is Probable cytosol aminopeptidase from Shigella dysenteriae serotype 1 (strain Sd197).